The chain runs to 412 residues: CCA-adding enzyme (412 aa).

2 residues coordinate ATP: Ser41 and Lys44. Residues Ser41 and Lys44 each contribute to the CTP site. The Mg(2+) site is built by Asp53, Asp55, and Asp106. 3 residues coordinate ATP: His129, Lys149, and Tyr158. 3 residues coordinate CTP: His129, Lys149, and Tyr158.

It belongs to the tRNA nucleotidyltransferase/poly(A) polymerase family. Archaeal CCA-adding enzyme subfamily. Homodimer. It depends on Mg(2+) as a cofactor.

The catalysed reaction is a tRNA precursor + 2 CTP + ATP = a tRNA with a 3' CCA end + 3 diphosphate. It catalyses the reaction a tRNA with a 3' CCA end + 2 CTP + ATP = a tRNA with a 3' CCACCA end + 3 diphosphate. Catalyzes the addition and repair of the essential 3'-terminal CCA sequence in tRNAs without using a nucleic acid template. Adds these three nucleotides in the order of C, C, and A to the tRNA nucleotide-73, using CTP and ATP as substrates and producing inorganic pyrophosphate. tRNA 3'-terminal CCA addition is required both for tRNA processing and repair. Also involved in tRNA surveillance by mediating tandem CCA addition to generate a CCACCA at the 3' terminus of unstable tRNAs. While stable tRNAs receive only 3'-terminal CCA, unstable tRNAs are marked with CCACCA and rapidly degraded. In Saccharolobus islandicus (strain Y.G.57.14 / Yellowstone #1) (Sulfolobus islandicus), this protein is CCA-adding enzyme.